A 316-amino-acid polypeptide reads, in one-letter code: Coproporphyrin III ferrochelatase (316 aa).

Fe-coproporphyrin III-binding positions include Tyr-13, Arg-30, 46–47, Ser-54, and Tyr-125; that span reads RY. Positions 183 and 264 each coordinate Fe(2+).

Belongs to the ferrochelatase family.

Its subcellular location is the cytoplasm. The catalysed reaction is Fe-coproporphyrin III + 2 H(+) = coproporphyrin III + Fe(2+). It functions in the pathway porphyrin-containing compound metabolism; protoheme biosynthesis. Its function is as follows. Involved in coproporphyrin-dependent heme b biosynthesis. Catalyzes the insertion of ferrous iron into coproporphyrin III to form Fe-coproporphyrin III. The protein is Coproporphyrin III ferrochelatase of Geobacillus kaustophilus (strain HTA426).